Consider the following 393-residue polypeptide: Major outer membrane porin, serovar E (393 aa).

A signal peptide spans 1 to 22 (MKKLLKSVLVFAALSSASSLQA).

This sequence belongs to the chlamydial porin (CP) (TC 1.B.2) family. As to quaternary structure, part of a disulfide cross-linked outer membrane complex (COMC) composed of the major outer membrane porin (MOMP), the small cysteine-rich protein (OmcA) and the large cysteine-rich periplasmic protein (OmcB).

The protein localises to the cell outer membrane. In terms of biological role, in elementary bodies (EBs, the infectious stage, which is able to survive outside the host cell) provides the structural integrity of the outer envelope through disulfide cross-links with the small cysteine-rich protein and the large cysteine-rich periplasmic protein. It has been described in publications as the Sarkosyl-insoluble COMC (Chlamydia outer membrane complex), and serves as the functional equivalent of peptidoglycan. Its function is as follows. Permits diffusion of specific solutes through the outer membrane. This Chlamydia trachomatis protein is Major outer membrane porin, serovar E (ompA).